Reading from the N-terminus, the 165-residue chain is Short form salivary protein D7R4 (165 aa).

The first 21 residues, 1-21 (MIRQVITSYFLTVCLLALVQG), serve as a signal peptide directing secretion. 3 disulfides stabilise this stretch: C27–C59, C40–C165, and C98–C117. Noradrenaline is bound by residues E28 and R43. E28 serves as a coordination point for serotonin. 4 residues coordinate serotonin: H56, Y115, D132, and E135. The histamine site is built by Y115, D132, and E135. The tryptamine site is built by Y115, D132, and E135. Noradrenaline is bound by residues D132 and E135.

The protein belongs to the PBP/GOBP family. As to expression, female saliva (at protein level). Female salivary gland. Not detected in female carcass without salivary glands. Not detected in male tissues.

It is found in the secreted. In terms of biological role, modulates blood feeding of female mosquitoes on vertebrate species by binding and sequestering different mediators involved in the host response. Binds serotonin, noradrenaline, histamine and tryptamine. Inhibits histamine-, serotonin- and partially noradrenaline-induced smooth muscle contraction. Exhibits vasodilating activity. This Anopheles gambiae (African malaria mosquito) protein is Short form salivary protein D7R4.